The sequence spans 474 residues: Probable glycine dehydrogenase (decarboxylating) subunit 2 (474 aa).

At Lys262 the chain carries N6-(pyridoxal phosphate)lysine.

It belongs to the GcvP family. C-terminal subunit subfamily. In terms of assembly, the glycine cleavage system is composed of four proteins: P, T, L and H. In this organism, the P 'protein' is a heterodimer of two subunits. Pyridoxal 5'-phosphate serves as cofactor.

It carries out the reaction N(6)-[(R)-lipoyl]-L-lysyl-[glycine-cleavage complex H protein] + glycine + H(+) = N(6)-[(R)-S(8)-aminomethyldihydrolipoyl]-L-lysyl-[glycine-cleavage complex H protein] + CO2. Functionally, the glycine cleavage system catalyzes the degradation of glycine. The P protein binds the alpha-amino group of glycine through its pyridoxal phosphate cofactor; CO(2) is released and the remaining methylamine moiety is then transferred to the lipoamide cofactor of the H protein. The polypeptide is Probable glycine dehydrogenase (decarboxylating) subunit 2 (Thermotoga petrophila (strain ATCC BAA-488 / DSM 13995 / JCM 10881 / RKU-1)).